Consider the following 601-residue polypeptide: Bifunctional protein GlmU (601 aa).

The tract at residues 1 to 375 is pyrophosphorylase; that stretch reads MKSDLAIVIL…SELLLGVNNR (375 aa). UDP-N-acetyl-alpha-D-glucosamine-binding positions include 10–13, K24, Q75, and 81–82; these read LAAG and GT. Mg(2+) is bound at residue D165. Residues G201, E216, N230, and N373 each coordinate UDP-N-acetyl-alpha-D-glucosamine. N373 contacts Mg(2+). Residues 376 to 396 form a linker region; the sequence is VQLAKTEKILNDQIIKRWQLY. The interval 397–601 is N-acetyltransferase; sequence GVTIKSPETT…PKWAENRGDG (205 aa). The UDP-N-acetyl-alpha-D-glucosamine site is built by R478 and K496. The active-site Proton acceptor is the H508. Residues Y511 and N522 each coordinate UDP-N-acetyl-alpha-D-glucosamine. Acetyl-CoA-binding positions include A525, 531–532, and A568; that span reads NY.

This sequence in the N-terminal section; belongs to the N-acetylglucosamine-1-phosphate uridyltransferase family. The protein in the C-terminal section; belongs to the transferase hexapeptide repeat family. In terms of assembly, homotrimer. The cofactor is Mg(2+).

It localises to the cytoplasm. It carries out the reaction alpha-D-glucosamine 1-phosphate + acetyl-CoA = N-acetyl-alpha-D-glucosamine 1-phosphate + CoA + H(+). It catalyses the reaction N-acetyl-alpha-D-glucosamine 1-phosphate + UTP + H(+) = UDP-N-acetyl-alpha-D-glucosamine + diphosphate. It participates in nucleotide-sugar biosynthesis; UDP-N-acetyl-alpha-D-glucosamine biosynthesis; N-acetyl-alpha-D-glucosamine 1-phosphate from alpha-D-glucosamine 6-phosphate (route II): step 2/2. Its pathway is nucleotide-sugar biosynthesis; UDP-N-acetyl-alpha-D-glucosamine biosynthesis; UDP-N-acetyl-alpha-D-glucosamine from N-acetyl-alpha-D-glucosamine 1-phosphate: step 1/1. It functions in the pathway bacterial outer membrane biogenesis; LPS lipid A biosynthesis. Catalyzes the last two sequential reactions in the de novo biosynthetic pathway for UDP-N-acetylglucosamine (UDP-GlcNAc). The C-terminal domain catalyzes the transfer of acetyl group from acetyl coenzyme A to glucosamine-1-phosphate (GlcN-1-P) to produce N-acetylglucosamine-1-phosphate (GlcNAc-1-P), which is converted into UDP-GlcNAc by the transfer of uridine 5-monophosphate (from uridine 5-triphosphate), a reaction catalyzed by the N-terminal domain. The protein is Bifunctional protein GlmU of Tropheryma whipplei (strain TW08/27) (Whipple's bacillus).